The primary structure comprises 377 residues: Signal peptide peptidase (377 aa).

Positions 1–27 are disordered; it reads MDSALSDPHNGSAEAGGPTNSTTRPPS. The Lumenal portion of the chain corresponds to 1–31; sequence MDSALSDPHNGSAEAGGPTNSTTRPPSTPEG. N-linked (GlcNAc...) asparagine glycans are attached at residues asparagine 10 and asparagine 20. The chain crosses the membrane as a helical span at residues 32–52; that stretch reads IALAYGSLLLMALLPIFFGAL. The Cytoplasmic segment spans residues 53 to 77; it reads RSVRCARGKNASDMPETITSRDAAR. The chain crosses the membrane as a helical span at residues 78-98; it reads FPIIASCTLLGLYLFFKIFSQ. Residues 99–100 lie on the Lumenal side of the membrane; the sequence is EY. A helical membrane pass occupies residues 101–121; the sequence is INLLLSMYFFVLGILALSHTI. The Cytoplasmic segment spans residues 122–157; it reads SPFMNKFFPASFPNRQYQLLFTQGSGENKEEIINYE. The helical transmembrane segment at 158-178 threads the bilayer; the sequence is FDTKDLVCLGLSSIVGVWYLL. Topologically, residues 179 to 181 are lumenal; sequence RKH. Residues 182-202 traverse the membrane as a helical segment; that stretch reads WIANNLFGLAFSLNGVELLHL. The Cytoplasmic portion of the chain corresponds to 203–209; that stretch reads NNVSTGC. The chain crosses the membrane as a helical span at residues 210-230; sequence ILLGGLFIYDVFWVFGTNVMV. Residue aspartate 219 is part of the active site. At 231–256 the chain is on the lumenal side; that stretch reads TVAKSFEAPIKLVFPQDLLEKGLEAN. The helical transmembrane segment at 257-277 threads the bilayer; sequence NFAMLGLGDVVIPGIFIALLL. Aspartate 265 is an active-site residue. Topologically, residues 278-290 are cytoplasmic; sequence RFDISLKKNTHTY. The helical transmembrane segment at 291 to 311 threads the bilayer; the sequence is FYTSFAAYIFGLGLTIFIMHI. The Lumenal portion of the chain corresponds to 312-314; it reads FKH. A helical membrane pass occupies residues 315–335; that stretch reads AQPALLYLVPACIGFPVLVAL. Residues 317–319 carry the PAL motif; that stretch reads PAL. Residues 336–377 lie on the Cytoplasmic side of the membrane; the sequence is AKGEVTEMFSYEESNPKDPAAVTESKEGTEASASKGLEKKEK. Residues 345–377 are disordered; it reads SYEESNPKDPAAVTESKEGTEASASKGLEKKEK. Serine 367 bears the Phosphoserine mark.

The protein belongs to the peptidase A22B family. As to quaternary structure, monomer. Homodimer. Interacts with RNF139. Interacts with DERL1 and XBP1 isoform 1. In terms of processing, N-glycosylated. Widely expressed with highest levels in kidney, liver, placenta, lung, leukocytes and small intestine and reduced expression in heart and skeletal muscle. Expressed abundantly in the CNS with highest levels in thalamus and medulla.

The protein resides in the endoplasmic reticulum membrane. It is found in the membrane. It localises to the cell membrane. Catalyzes intramembrane proteolysis of signal peptides that have been removed from precursors of secretory and membrane proteins, resulting in the release of the fragment from the ER membrane into the cytoplasm. Required to generate lymphocyte cell surface (HLA-E) epitopes derived from MHC class I signal peptides. May be necessary for the removal of the signal peptide that remains attached to the hepatitis C virus core protein after the initial proteolytic processing of the polyprotein. Involved in the intramembrane cleavage of the integral membrane protein PSEN1. Cleaves the integral membrane protein XBP1 isoform 1 in a DERL1/RNF139-dependent manner. May play a role in graft rejection. This Homo sapiens (Human) protein is Signal peptide peptidase.